The primary structure comprises 84 residues: Toxin Tst1 (84 aa).

The first 19 residues, 1–19 (MKGMILFISCLLLIDIVVG), serve as a signal peptide directing secretion. Positions 21 to 82 (KEGYLMDHEG…VWDRATNKCG (62 aa)) constitute an LCN-type CS-alpha/beta domain. Intrachain disulfides connect Cys-31/Cys-81, Cys-35/Cys-57, Cys-43/Cys-62, and Cys-47/Cys-64. Cys-81 bears the Cysteine amide mark.

As to expression, expressed by the venom gland.

Its subcellular location is the secreted. Its function is as follows. Beta toxins bind voltage-independently at site-4 of sodium channels (Nav) and shift the voltage of activation toward more negative potentials thereby affecting sodium channel activation and promoting spontaneous and repetitive firing. This toxin is active only on mammals. Is toxic to mice. The polypeptide is Toxin Tst1 (Tityus stigmurus (Brazilian scorpion)).